The sequence spans 322 residues: Acetyl-coenzyme A carboxylase carboxyl transferase subunit beta (322 aa).

One can recognise a CoA carboxyltransferase N-terminal domain in the interval 24–293; the sequence is LWIKCPDTGQ…PAVEEPAVVD (270 aa).

It belongs to the AccD/PCCB family. As to quaternary structure, acetyl-CoA carboxylase is a heterohexamer composed of biotin carboxyl carrier protein (AccB), biotin carboxylase (AccC) and two subunits each of ACCase subunit alpha (AccA) and ACCase subunit beta (AccD).

It localises to the cytoplasm. It catalyses the reaction N(6)-carboxybiotinyl-L-lysyl-[protein] + acetyl-CoA = N(6)-biotinyl-L-lysyl-[protein] + malonyl-CoA. It functions in the pathway lipid metabolism; malonyl-CoA biosynthesis; malonyl-CoA from acetyl-CoA: step 1/1. Component of the acetyl coenzyme A carboxylase (ACC) complex. Biotin carboxylase (BC) catalyzes the carboxylation of biotin on its carrier protein (BCCP) and then the CO(2) group is transferred by the transcarboxylase to acetyl-CoA to form malonyl-CoA. This chain is Acetyl-coenzyme A carboxylase carboxyl transferase subunit beta, found in Rhodopseudomonas palustris (strain HaA2).